The chain runs to 294 residues: Casein kinase II subunit beta (294 aa).

2 disordered regions span residues 66–90 (DHNTDNTTTNTSNNNDSRNGTSKRN) and 269–294 (KRMEEDDEEEEDEVEEEDDDRTMASE). Over residues 70–87 (DNTTTNTSNNNDSRNGTS) the composition is skewed to low complexity. Residues 273–288 (EDDEEEEDEVEEEDDD) are compositionally biased toward acidic residues.

It belongs to the casein kinase 2 subunit beta family. Tetramer composed of two alpha chains, one beta chain and one beta' chain. Post-translationally, phosphorylated by alpha subunit.

In terms of biological role, regulatory subunit of casein kinase II/CK2. As part of the kinase complex regulates the basal catalytic activity of the alpha subunit a constitutively active serine/threonine-protein kinase that phosphorylates a large number of substrates containing acidic residues C-terminal to the phosphorylated serine or threonine. In Candida albicans (Yeast), this protein is Casein kinase II subunit beta (CKB1).